Reading from the N-terminus, the 293-residue chain is Probable endonuclease 4 (293 aa).

Positions 78, 118, 154, 188, 191, 225, 238, 240, and 270 each coordinate Zn(2+).

This sequence belongs to the AP endonuclease 2 family. It depends on Zn(2+) as a cofactor.

The catalysed reaction is Endonucleolytic cleavage to 5'-phosphooligonucleotide end-products.. Its function is as follows. Endonuclease IV plays a role in DNA repair. It cleaves phosphodiester bonds at apurinic or apyrimidinic (AP) sites, generating a 3'-hydroxyl group and a 5'-terminal sugar phosphate. The protein is Probable endonuclease 4 of Vibrio vulnificus (strain YJ016).